Consider the following 607-residue polypeptide: Glutamine--fructose-6-phosphate aminotransferase [isomerizing] (607 aa).

The Nucleophile; for GATase activity role is filled by C2. The 216-residue stretch at 2–217 (CGIVGIVGHS…DGDWAVVRRD (216 aa)) folds into the Glutamine amidotransferase type-2 domain. SIS domains are found at residues 283-422 (LPFD…ARGV) and 455-597 (IARE…VDQP). K602 acts as the For Fru-6P isomerization activity in catalysis.

As to quaternary structure, homodimer.

The protein localises to the cytoplasm. The enzyme catalyses D-fructose 6-phosphate + L-glutamine = D-glucosamine 6-phosphate + L-glutamate. Catalyzes the first step in hexosamine metabolism, converting fructose-6P into glucosamine-6P using glutamine as a nitrogen source. The protein is Glutamine--fructose-6-phosphate aminotransferase [isomerizing] of Mesorhizobium japonicum (strain LMG 29417 / CECT 9101 / MAFF 303099) (Mesorhizobium loti (strain MAFF 303099)).